Reading from the N-terminus, the 90-residue chain is MAVKIRLTRMGSKKKPYYRINVADSRSPRDGRFIETVGTYNPLVAENQVTLKEDRVLAWLENGAQPSDTVRNILSKEGVLKKFHDSKYSK.

Belongs to the bacterial ribosomal protein bS16 family.

The protein is Small ribosomal subunit protein bS16 of Streptococcus gordonii (strain Challis / ATCC 35105 / BCRC 15272 / CH1 / DL1 / V288).